The chain runs to 84 residues: Capsid protein G8P (84 aa).

The N-terminal stretch at 1–29 (MSVITKVAAAKNKIVVGAGLLMASAGAFA) is a signal peptide. The Periplasmic segment spans residues 30-58 (ADDGTSTATSYATEAMNSLKTQATDLIDQ). Residues 59–76 (TWPVVTSVAVAGLAIRLF) form a helical membrane-spanning segment. Topologically, residues 77–84 (KKFSSKAV) are cytoplasmic.

The protein belongs to the inovirus capsid protein family. As to quaternary structure, homomultimerizes. There are several thousands of this protein in the phage capsid.

Its subcellular location is the virion. It localises to the host membrane. Its function is as follows. Self assembles to form a helical capsid wrapping up the viral genomic DNA. The capsid displays a filamentous structure with a length of 760-1950 nm and a width of 6-8 nm. The virion assembly and budding take place at the host inner membrane. This chain is Capsid protein G8P (VIII), found in Escherichia coli (Bacteriophage I2-2).